Here is a 620-residue protein sequence, read N- to C-terminus: Somatic embryogenesis receptor kinase 4 (620 aa).

The N-terminal stretch at 1-33 (MTSSKMEQRSLLCFLYLLLLFNFTLRVAGNAEG) is a signal peptide. Topologically, residues 34 to 234 (DALTQLKNSL…GGQMTAAIAG (201 aa)) are extracellular. LRR repeat units follow at residues 100-122 (NLQY…LGDL), 124-146 (ELVS…LGKL), 148-170 (KLRF…LTSV), 171-193 (QLQV…GSFS), and 194-215 (LFTP…PPTS). Residue N110 is glycosylated (N-linked (GlcNAc...) asparagine). Residues N156, N189, and N202 are each glycosylated (N-linked (GlcNAc...) asparagine). The interval 205–227 (LTDLPEPPPTSTSPTPPPPSGGQ) is disordered. The segment covering 209–224 (PEPPPTSTSPTPPPPS) has biased composition (pro residues). Residues 235–255 (GVAAGAALLFAVPAIAFAWWL) form a helical membrane-spanning segment. At 256–620 (RRKPQDHFFD…IENDYPSGPR (365 aa)) the chain is on the cytoplasmic side. At T291 the chain carries Phosphothreonine. In terms of domain architecture, Protein kinase spans 294-591 (FSNKNVLGRG…KEEMPIHDFN (298 aa)). S295 bears the Phosphoserine mark. ATP contacts are provided by residues 300 to 308 (LGRGGFGKV) and K322. Residues S375 and S378 each carry the phosphoserine modification. D421 acts as the Proton acceptor in catalysis. Residues T454, T455, and T460 each carry the phosphothreonine modification. Position 468 is a phosphotyrosine (Y468). Residue S470 is modified to Phosphoserine. The residue at position 471 (T471) is a Phosphothreonine. Phosphoserine is present on S475. At T551 the chain carries Phosphothreonine.

Belongs to the protein kinase superfamily. Ser/Thr protein kinase family. As to quaternary structure, interacts with the EF-Tu receptor EFR and FLS2 in a specific ligand-induced manner. Interacts with TMK4/BARK1. Interacts with ERECTA in a EPF2-induced manner. Interacts with ERL1 in a EPF1-induced manner. Interacts with TMM. Forms a complex with MIK2 in response to SCOOP12 perception. Post-translationally, autophosphorylated on Thr and Tyr residues.

Its subcellular location is the cell membrane. It carries out the reaction L-seryl-[protein] + ATP = O-phospho-L-seryl-[protein] + ADP + H(+). It catalyses the reaction L-threonyl-[protein] + ATP = O-phospho-L-threonyl-[protein] + ADP + H(+). The enzyme catalyses L-tyrosyl-[protein] + ATP = O-phospho-L-tyrosyl-[protein] + ADP + H(+). Functionally, dual specificity kinase acting on both serine/threonine- and tyrosine-containing substrates. Positively regulates the BR-dependent plant growth pathway and negatively regulates the BR-independent cell-death pathway. Required during SCOOP small peptides (e.g. SCOOP10 and SCOOP12) perception and signaling; associates with MIK2 as a coreceptor upon MIK2 perception of SCOOP peptides, and relays the signaling through the activation of receptor-like cytosolic kinases (RLCKs) BIK1 and PBL1. The chain is Somatic embryogenesis receptor kinase 4 from Arabidopsis thaliana (Mouse-ear cress).